The chain runs to 354 residues: Guanine nucleotide-binding protein G(i) subunit alpha-1 (354 aa).

A lipid anchor (N-myristoyl glycine) is attached at glycine 2. Residue cysteine 3 is the site of S-palmitoyl cysteine attachment. The 323-residue stretch at 32–354 (REVKLLLLGA…KNNLKDCGLF (323 aa)) folds into the G-alpha domain. The segment at 35–48 (KLLLLGAGESGKST) is G1 motif. Residues 43 to 48 (ESGKST), 150 to 151 (DS), and 175 to 178 (LRTR) each bind GTP. Serine 47 is a Mg(2+) binding site. Residues 173-181 (DVLRTRVKT) are G2 motif. Threonine 181 is a binding site for Mg(2+). The G3 motif stretch occupies residues 196–205 (FKMFDVGGQR). GTP contacts are provided by residues 200–204 (DVGGQ), 269–272 (NKKD), and alanine 326. The tract at residues 265–272 (ILFLNKKD) is G4 motif. The G5 motif stretch occupies residues 324–329 (TCATDT).

Belongs to the G-alpha family. G(i/o/t/z) subfamily. Heterotrimeric G proteins are composed of 3 units; alpha, beta and gamma. The alpha chain contains the guanine nucleotide binding site. Part of a spindle orientation complex. Identified in complex with the beta subunit GNB1 and the gamma subunit GNG1. Identified in complex with the beta subunit GNB1 and the gamma subunit GNG2. GTP binding causes dissociation of the heterotrimer, liberating the individual subunits so that they can interact with downstream effector proteins. In terms of processing, myristoylation at Gly-2 is required for membrane anchoring before palmitoylation. Post-translationally, palmitoylation at Cys-3 varies with membrane lipid composition.

It is found in the nucleus. The protein localises to the cytoplasm. Its subcellular location is the cell membrane. It localises to the cytoskeleton. The protein resides in the microtubule organizing center. It is found in the centrosome. The protein localises to the cell cortex. Its subcellular location is the membrane. The catalysed reaction is GTP + H2O = GDP + phosphate + H(+). In terms of biological role, guanine nucleotide-binding proteins (G proteins) function as transducers downstream of G protein-coupled receptors (GPCRs) in numerous signaling cascades. The alpha chain contains the guanine nucleotide binding site and alternates between an active, GTP-bound state and an inactive, GDP-bound state. Signaling by an activated GPCR promotes GDP release and GTP binding. The alpha subunit has a low GTPase activity that converts bound GTP to GDP, thereby terminating the signal. Both GDP release and GTP hydrolysis are modulated by numerous regulatory proteins. Signaling is mediated via effector proteins, such as adenylate cyclase. Inhibits adenylate cyclase activity, leading to decreased intracellular cAMP levels. Required for cortical dynein-dynactin complex recruitment during metaphase. The protein is Guanine nucleotide-binding protein G(i) subunit alpha-1 (gnai1) of Oryzias latipes (Japanese rice fish).